Consider the following 986-residue polypeptide: Ankyrin repeat, PH and SEC7 domain containing protein secG (986 aa).

Residues 1 to 28 show a composition bias toward low complexity; that stretch reads MGSTSNSTKNTGSTTTTTTTAAPATTAK. Residues 1–43 are disordered; the sequence is MGSTSNSTKNTGSTTTTTTTAAPATTAKHSNSAPTRPSVHYYS. A compositionally biased stretch (polar residues) spans 29-43; sequence HSNSAPTRPSVHYYS. ANK repeat units lie at residues 34–63, 68–97, 101–131, 135–164, 168–197, 201–230, 234–263, 267–296, 300–329, 334–363, 367–396, 400–429, 433–462, 466–495, and 499–528; these read PTRP…TSPD, EKRT…NANI, AGNT…DVNT, KNGT…DPRA, NGET…KVNA, DCIT…KVDP, HGIS…NINC, EGVT…KINM, MGET…TMID, RQST…QINI, EGAT…PICI, QGAT…ELEV, QGGT…NVNA, HSST…RIDA, and AGKT…DLDQ. Residues 580–770 form the SEC7 domain; the sequence is QLAAEKQKLL…ENLYDKIVTN (191 aa). The region spanning 784-895 is the PH domain; it reads HVEKKGWLTK…WVQSIKSNIH (112 aa). The disordered stretch occupies residues 911 to 986; it reads IRGRGKVSTK…PVQQQTSALS (76 aa). Positions 920-929 are enriched in polar residues; that stretch reads KPIQNRKQTI. 2 stretches are compositionally biased toward low complexity: residues 936–953 and 963–986; these read TTTT…SVGS and SSGS…SALS.

The chain is Ankyrin repeat, PH and SEC7 domain containing protein secG (secG) from Dictyostelium discoideum (Social amoeba).